We begin with the raw amino-acid sequence, 170 residues long: MALLPILEFPDPRLRTKAVRVGVAEVVSSSFQTLLDDMFETMYAAPGIGLAATQVNVHQRFMVIDVSEEKNVPMVFINPEIVTREGDQVFQEGCLSVPGIHADVTRALSIVVRFLDRHGDEQQLTAEGLLAVCIQHEMDHLDGKLFIDYLSPLKRDMVRRKLEKQRRRAS.

The Fe cation site is built by C94 and H136. The active site involves E137. H140 contributes to the Fe cation binding site.

It belongs to the polypeptide deformylase family. It depends on Fe(2+) as a cofactor.

It catalyses the reaction N-terminal N-formyl-L-methionyl-[peptide] + H2O = N-terminal L-methionyl-[peptide] + formate. Functionally, removes the formyl group from the N-terminal Met of newly synthesized proteins. Requires at least a dipeptide for an efficient rate of reaction. N-terminal L-methionine is a prerequisite for activity but the enzyme has broad specificity at other positions. This is Peptide deformylase from Xylella fastidiosa (strain 9a5c).